We begin with the raw amino-acid sequence, 87 residues long: A-agglutinin-binding subunit (87 aa).

Residues 1–18 (MQLLRCFSIFSVIASVLA) form the signal peptide. O-linked (Man...) threonine glycosylation is present at T22. S30 carries an O-linked (Man...) serine glycan. A glycan (O-linked (Man...) threonine) is linked at T32. Residue S39 is glycosylated (O-linked (Man...) serine). The O-linked (Man...) threonine glycan is linked to T63. S66 carries an O-linked (Man...) serine glycan. O-linked (Man...) threonine glycosylation is present at T75.

In terms of assembly, heterodimer; disulfide-linked. Interacts with SAG1.

Its function is as follows. Receptor binding subunit of the a-agglutinin heterodimer. S.cerevisiae a and alpha cells express the complementary cell surface glycoproteins a-agglutinin and alpha-agglutinin, respectively, which interact with one another to promote cellular aggregation during mating. The protein is A-agglutinin-binding subunit (AGA2) of Saccharomyces cerevisiae (strain ATCC 204508 / S288c) (Baker's yeast).